The following is a 466-amino-acid chain: uncharacterized protein (466 aa).

This sequence belongs to the myoviridae tail sheath protein family.

This is an uncharacterized protein from Bacillus subtilis (strain 168).